The following is a 198-amino-acid chain: NAD(P)H dehydrogenase (quinone) (198 aa).

One can recognise a Flavodoxin-like domain in the interval 6–190; it reads ILVLYYSRHG…LCRALGKRLA (185 aa). FMN is bound by residues 12–17, 79–81, 114–120, and H135; these read SRHGAT, TRF, and STASLHG.

It belongs to the WrbA family. In terms of assembly, homodimer. FMN serves as cofactor.

It catalyses the reaction a quinone + NADH + H(+) = a quinol + NAD(+). It carries out the reaction a quinone + NADPH + H(+) = a quinol + NADP(+). This is NAD(P)H dehydrogenase (quinone) from Pseudomonas aeruginosa (strain ATCC 15692 / DSM 22644 / CIP 104116 / JCM 14847 / LMG 12228 / 1C / PRS 101 / PAO1).